Here is a 101-residue protein sequence, read N- to C-terminus: ATP-dependent Clp protease adapter protein ClpS (101 aa).

The protein belongs to the ClpS family. As to quaternary structure, binds to the N-terminal domain of the chaperone ClpA.

In terms of biological role, involved in the modulation of the specificity of the ClpAP-mediated ATP-dependent protein degradation. This chain is ATP-dependent Clp protease adapter protein ClpS, found in Corynebacterium efficiens (strain DSM 44549 / YS-314 / AJ 12310 / JCM 11189 / NBRC 100395).